The chain runs to 227 residues: Cytochrome c oxidase subunit 2 (227 aa).

Residues 1 to 26 lie on the Mitochondrial intermembrane side of the membrane; it reads MATWSNFNLQNSASPLMEQIIFFHDH. A helical membrane pass occupies residues 27 to 51; sequence TLVILIMITILVGYLMISLFFNSYI. Residues 52–62 are Mitochondrial matrix-facing; that stretch reads NRFLLEGQMIE. Residues 63–81 form a helical membrane-spanning segment; the sequence is LIWTILPAITLIFIALPSL. The Mitochondrial intermembrane segment spans residues 82–227; the sequence is RLLYLLDELN…NFINWINNYS (146 aa). The Cu cation site is built by H161, C196, E198, C200, H204, and M207. Residue E198 coordinates Mg(2+).

This sequence belongs to the cytochrome c oxidase subunit 2 family. As to quaternary structure, component of the cytochrome c oxidase (complex IV, CIV), a multisubunit enzyme composed of a catalytic core of 3 subunits and several supernumerary subunits. The complex exists as a monomer or a dimer and forms supercomplexes (SCs) in the inner mitochondrial membrane with ubiquinol-cytochrome c oxidoreductase (cytochrome b-c1 complex, complex III, CIII). Requires Cu cation as cofactor.

The protein localises to the mitochondrion inner membrane. It carries out the reaction 4 Fe(II)-[cytochrome c] + O2 + 8 H(+)(in) = 4 Fe(III)-[cytochrome c] + 2 H2O + 4 H(+)(out). Its function is as follows. Component of the cytochrome c oxidase, the last enzyme in the mitochondrial electron transport chain which drives oxidative phosphorylation. The respiratory chain contains 3 multisubunit complexes succinate dehydrogenase (complex II, CII), ubiquinol-cytochrome c oxidoreductase (cytochrome b-c1 complex, complex III, CIII) and cytochrome c oxidase (complex IV, CIV), that cooperate to transfer electrons derived from NADH and succinate to molecular oxygen, creating an electrochemical gradient over the inner membrane that drives transmembrane transport and the ATP synthase. Cytochrome c oxidase is the component of the respiratory chain that catalyzes the reduction of oxygen to water. Electrons originating from reduced cytochrome c in the intermembrane space (IMS) are transferred via the dinuclear copper A center (CU(A)) of subunit 2 and heme A of subunit 1 to the active site in subunit 1, a binuclear center (BNC) formed by heme A3 and copper B (CU(B)). The BNC reduces molecular oxygen to 2 water molecules using 4 electrons from cytochrome c in the IMS and 4 protons from the mitochondrial matrix. This Choristoneura fumiferana (Spruce budworm moth) protein is Cytochrome c oxidase subunit 2 (COII).